Here is a 275-residue protein sequence, read N- to C-terminus: uncharacterized protein (275 aa).

The region spanning 1 to 162 (NLFSVIVSLI…ITSYWTEVQR (162 aa)) is the ABC transmembrane type-1 domain. 3 helical membrane passes run 21-41 (LYLV…GNIM), 106-126 (IMNL…YYLM), and 137-157 (FAYV…TSYW).

It localises to the cell membrane. This is an uncharacterized protein from Staphylococcus epidermidis.